Reading from the N-terminus, the 708-residue chain is Capsid scaffolding protein (708 aa).

Catalysis depends on charge relay system residues histidine 63, serine 132, and histidine 157. Disordered stretches follow at residues 270-339 (SAER…MSHP), 455-565 (HPSY…QQQR), and 593-620 (ALPS…GGGE). Over residues 284 to 293 (PAAGARVPSS) the composition is skewed to low complexity. Over residues 294–311 (SPSPPVEPPSPVQPPALP) the composition is skewed to pro residues. The span at 326-339 (SPSEPAEAASMSHP) shows a compositional bias: low complexity. Residues 333 to 352 (AASMSHPLSAAVPAATAPPG) are interaction with pAP. A compositionally biased stretch (basic residues) spans 498–513 (KQHRHGGSGGHNKRRK). 2 short sequence motifs (nuclear localization signal) span residues 510-515 (KRRKET) and 537-543 (RARKRLK). The segment covering 593–615 (ALPSAASSSPTTTTVCTPTSELT) has biased composition (low complexity). The interaction with major capsid protein stretch occupies residues 688 to 708 (PPKDMVDLNRRIFVAALNKLE).

Belongs to the herpesviridae capsid scaffolding protein family. Homomultimer. Interacts with major capsid protein. As to quaternary structure, exists in a monomer-dimer equilibrium with the dimer being the active species. In terms of processing, capsid scaffolding protein is cleaved by assemblin after formation of the spherical procapsid. As a result, the capsid obtains its mature, icosahedral shape. Cleavages occur at two or more sites: release (R-site) and maturation (M-site).

The protein resides in the host cytoplasm. It is found in the host nucleus. It carries out the reaction Cleaves -Ala-|-Ser- and -Ala-|-Ala- bonds in the scaffold protein.. Functionally, acts as a scaffold protein by binding major capsid protein in the cytoplasm, inducing the nuclear localization of both proteins. Multimerizes in the nucleus such as major capsid protein forms the icosahedral T=16 capsid. Autocatalytic cleavage releases the assembly protein, and subsequently abolishes interaction with major capsid protein. Cleavages products are evicted from the capsid before or during DNA packaging. Its function is as follows. Protease that plays an essential role in virion assembly within the nucleus. Catalyzes the cleavage of the assembly protein after formation of the spherical procapsid. By that cleavage, the capsid matures and gains its icosahedral shape. The cleavage sites seem to include -Ala-Ser-, -Ala-Ala-, as well as Ala-Thr bonds. Assemblin and cleavages products are evicted from the capsid before or during DNA packaging. Plays a major role in capsid assembly. Acts as a scaffold protein by binding major capsid protein. Multimerizes in the nucleus such as major capsid protein forms the icosahedral T=16 capsid. Cleaved by assemblin after capsid completion. The cleavages products are evicted from the capsid before or during DNA packaging. The sequence is that of Capsid scaffolding protein (UL80) from Homo sapiens (Human).